The following is a 214-amino-acid chain: A-type ATP synthase subunit D (214 aa).

Belongs to the V-ATPase D subunit family. In terms of assembly, has multiple subunits with at least A(3), B(3), C, D, E, F, H, I and proteolipid K(x).

Its subcellular location is the cell membrane. Its function is as follows. Component of the A-type ATP synthase that produces ATP from ADP in the presence of a proton gradient across the membrane. The polypeptide is A-type ATP synthase subunit D (Methanosphaera stadtmanae (strain ATCC 43021 / DSM 3091 / JCM 11832 / MCB-3)).